The following is a 649-amino-acid chain: 1-deoxy-D-xylulose-5-phosphate synthase (649 aa).

Thiamine diphosphate contacts are provided by residues H84 and 125–127 (GHS). A Mg(2+)-binding site is contributed by D156. Thiamine diphosphate is bound by residues 157–158 (GS), N185, F292, and E385. N185 serves as a coordination point for Mg(2+).

It belongs to the transketolase family. DXPS subfamily. As to quaternary structure, homodimer. The cofactor is Mg(2+). Thiamine diphosphate is required as a cofactor.

The enzyme catalyses D-glyceraldehyde 3-phosphate + pyruvate + H(+) = 1-deoxy-D-xylulose 5-phosphate + CO2. The protein operates within metabolic intermediate biosynthesis; 1-deoxy-D-xylulose 5-phosphate biosynthesis; 1-deoxy-D-xylulose 5-phosphate from D-glyceraldehyde 3-phosphate and pyruvate: step 1/1. In terms of biological role, catalyzes the acyloin condensation reaction between C atoms 2 and 3 of pyruvate and glyceraldehyde 3-phosphate to yield 1-deoxy-D-xylulose-5-phosphate (DXP). This chain is 1-deoxy-D-xylulose-5-phosphate synthase, found in Saccharophagus degradans (strain 2-40 / ATCC 43961 / DSM 17024).